A 503-amino-acid chain; its full sequence is Probable DNA ligase (503 aa).

Glu210 contacts ATP. Residue Lys212 is the N6-AMP-lysine intermediate of the active site. Arg217, Arg232, Glu261, Phe296, Arg367, and Lys373 together coordinate ATP.

The protein belongs to the ATP-dependent DNA ligase family. It depends on Mg(2+) as a cofactor.

It carries out the reaction ATP + (deoxyribonucleotide)n-3'-hydroxyl + 5'-phospho-(deoxyribonucleotide)m = (deoxyribonucleotide)n+m + AMP + diphosphate.. In terms of biological role, DNA ligase that seals nicks in double-stranded DNA during DNA replication, DNA recombination and DNA repair. The sequence is that of Probable DNA ligase from Rhodococcus opacus (strain B4).